The following is a 208-amino-acid chain: FMN-dependent NADH:quinone oxidoreductase 3 (208 aa).

Belongs to the azoreductase type 1 family. As to quaternary structure, homodimer. Requires FMN as cofactor.

The enzyme catalyses 2 a quinone + NADH + H(+) = 2 a 1,4-benzosemiquinone + NAD(+). The catalysed reaction is N,N-dimethyl-1,4-phenylenediamine + anthranilate + 2 NAD(+) = 2-(4-dimethylaminophenyl)diazenylbenzoate + 2 NADH + 2 H(+). Functionally, quinone reductase that provides resistance to thiol-specific stress caused by electrophilic quinones. Its function is as follows. Also exhibits azoreductase activity. Catalyzes the reductive cleavage of the azo bond in aromatic azo compounds to the corresponding amines. This chain is FMN-dependent NADH:quinone oxidoreductase 3, found in Bacillus cereus (strain ATCC 14579 / DSM 31 / CCUG 7414 / JCM 2152 / NBRC 15305 / NCIMB 9373 / NCTC 2599 / NRRL B-3711).